The chain runs to 437 residues: UDP-glucose 6-dehydrogenase (437 aa).

NAD(+)-binding residues include valine 11, aspartate 30, lysine 35, threonine 86, threonine 122, and glutamate 155. Residues 151-155 (EFLRE), lysine 209, asparagine 213, 254-258 (FLHAG), and glycine 262 contribute to the substrate site. Cysteine 265 (nucleophile) is an active-site residue. Lysine 268 serves as a coordination point for NAD(+). Residue lysine 326 participates in substrate binding. Arginine 333 lines the NAD(+) pocket.

This sequence belongs to the UDP-glucose/GDP-mannose dehydrogenase family.

The catalysed reaction is UDP-alpha-D-glucose + 2 NAD(+) + H2O = UDP-alpha-D-glucuronate + 2 NADH + 3 H(+). Its pathway is nucleotide-sugar biosynthesis; UDP-alpha-D-glucuronate biosynthesis; UDP-alpha-D-glucuronate from UDP-alpha-D-glucose: step 1/1. The protein operates within capsule biogenesis; capsule polysaccharide biosynthesis. This is UDP-glucose 6-dehydrogenase from Rhizobium meliloti (strain 1021) (Ensifer meliloti).